The primary structure comprises 349 residues: Alanine racemase (349 aa).

The Proton acceptor; specific for D-alanine role is filled by Lys-35. Residue Lys-35 is modified to N6-(pyridoxal phosphate)lysine. Arg-130 serves as a coordination point for substrate. Catalysis depends on Tyr-244, which acts as the Proton acceptor; specific for L-alanine. Met-292 serves as a coordination point for substrate.

It belongs to the alanine racemase family. Pyridoxal 5'-phosphate serves as cofactor.

The enzyme catalyses L-alanine = D-alanine. It functions in the pathway amino-acid biosynthesis; D-alanine biosynthesis; D-alanine from L-alanine: step 1/1. Catalyzes the interconversion of L-alanine and D-alanine. May also act on other amino acids. The chain is Alanine racemase (alr) from Dinoroseobacter shibae (strain DSM 16493 / NCIMB 14021 / DFL 12).